Consider the following 336-residue polypeptide: MVNIAINGFGRIGRNVLRALYESGRNNEFNVVAINDIAKPEGIAHLLKYDTAHGRFRFDVALENNTLNVAGDDIALLAISDIKELPWRDLGVDIVLECTGKFDDRASGQAHLDAGAGKVLFSSPGSPDLDNTVIFGTNEDTLTSEQKLVSNGSCTTNCIVPVIQALDAAFGVESGTITTIHASMHDQQVIDAYHEDLRRTRAASQSIIPVDTRLAAGIERILPKFAGKFEAIAVRVPTINVTAMDLSVTLQSKVTIEQVNQALRSAKAGRLQGILDYTEEPLVSVDFNHDPHSCIVDGTQTRVSHKQLVKTLVWCDNEWGFANRMLDTAKVMFDAK.

11–12 (RI) lines the NAD(+) pocket. Substrate-binding positions include 153 to 155 (SCT), R199, 212 to 213 (TR), and R235. The active-site Nucleophile is C154. N317 contributes to the NAD(+) binding site.

Belongs to the glyceraldehyde-3-phosphate dehydrogenase family. Epd subfamily. In terms of assembly, homotetramer.

The protein localises to the cytoplasm. It catalyses the reaction D-erythrose 4-phosphate + NAD(+) + H2O = 4-phospho-D-erythronate + NADH + 2 H(+). It participates in cofactor biosynthesis; pyridoxine 5'-phosphate biosynthesis; pyridoxine 5'-phosphate from D-erythrose 4-phosphate: step 1/5. Its function is as follows. Catalyzes the NAD-dependent conversion of D-erythrose 4-phosphate to 4-phosphoerythronate. The polypeptide is D-erythrose-4-phosphate dehydrogenase (Alteromonas mediterranea (strain DSM 17117 / CIP 110805 / LMG 28347 / Deep ecotype)).